The sequence spans 391 residues: uncharacterized protein (391 aa).

A Flavodoxin-like domain is found at 247-387; sequence AVIVYATIYS…KIKEFGRKLA (141 aa).

This is an uncharacterized protein from Methanocaldococcus jannaschii (strain ATCC 43067 / DSM 2661 / JAL-1 / JCM 10045 / NBRC 100440) (Methanococcus jannaschii).